A 257-amino-acid chain; its full sequence is MMMQQQITGTEHGWWIISNENRIWLPKGELPFGMATQWSLQGKIALPIGEWQGEKVWLIRQKMVSNMVSLRQIVASDRGLFQLAGRGVQLAEFYRSHQYCGYCGNEMHHSVSEWACLCHHCHERYYPQIAPCIIVGIRRDDHILLAQHQHHRGGVYTVLAGFVEVGETLEEAVVREVMEESNIKIRNLRYVASQPWPFPHSLMMAFLADYDSGEIRHDPQELISADWYHYDQLPLIPPHNTIARRLIEDTIVLCRNT.

Substrate contacts are provided by K27 and R71. Zn(2+)-binding residues include C100 and C103. Residue E113 coordinates substrate. Positions 118 and 121 each coordinate Zn(2+). Position 126 (Y126) interacts with substrate. Residues 127 to 251 (PQIAPCIIVG…IARRLIEDTI (125 aa)) enclose the Nudix hydrolase domain. A divalent metal cation contacts are provided by A160, E176, and E180. A Nudix box motif is present at residues 161–182 (GFVEVGETLEEAVVREVMEESN). 194–201 (QPWPFPHS) serves as a coordination point for substrate. A divalent metal cation is bound at residue E221. A243 lines the substrate pocket.

It belongs to the Nudix hydrolase family. NudC subfamily. In terms of assembly, homodimer. Mg(2+) serves as cofactor. Mn(2+) is required as a cofactor. Requires Zn(2+) as cofactor.

It catalyses the reaction a 5'-end NAD(+)-phospho-ribonucleoside in mRNA + H2O = a 5'-end phospho-adenosine-phospho-ribonucleoside in mRNA + beta-nicotinamide D-ribonucleotide + 2 H(+). It carries out the reaction NAD(+) + H2O = beta-nicotinamide D-ribonucleotide + AMP + 2 H(+). The enzyme catalyses NADH + H2O = reduced beta-nicotinamide D-ribonucleotide + AMP + 2 H(+). MRNA decapping enzyme that specifically removes the nicotinamide adenine dinucleotide (NAD) cap from a subset of mRNAs by hydrolyzing the diphosphate linkage to produce nicotinamide mononucleotide (NMN) and 5' monophosphate mRNA. The NAD-cap is present at the 5'-end of some mRNAs and stabilizes RNA against 5'-processing. Has preference for mRNAs with a 5'-end purine. Catalyzes the hydrolysis of a broad range of dinucleotide pyrophosphates. The protein is NAD-capped RNA hydrolase NudC of Photorhabdus laumondii subsp. laumondii (strain DSM 15139 / CIP 105565 / TT01) (Photorhabdus luminescens subsp. laumondii).